The primary structure comprises 474 residues: Bifunctional protein HldE (474 aa).

Positions 1–318 are ribokinase; that stretch reads MKLSMPRFDQ…RAIQREEGSE (318 aa). Residue 194-197 coordinates ATP; the sequence is NLSE. Asp263 is an active-site residue. The interval 343 to 474 is cytidylyltransferase; it reads FTNGCFDILH…AIVEKIRGQG (132 aa).

It in the N-terminal section; belongs to the carbohydrate kinase PfkB family. This sequence in the C-terminal section; belongs to the cytidylyltransferase family. Homodimer.

The catalysed reaction is D-glycero-beta-D-manno-heptose 7-phosphate + ATP = D-glycero-beta-D-manno-heptose 1,7-bisphosphate + ADP + H(+). It catalyses the reaction D-glycero-beta-D-manno-heptose 1-phosphate + ATP + H(+) = ADP-D-glycero-beta-D-manno-heptose + diphosphate. It participates in nucleotide-sugar biosynthesis; ADP-L-glycero-beta-D-manno-heptose biosynthesis; ADP-L-glycero-beta-D-manno-heptose from D-glycero-beta-D-manno-heptose 7-phosphate: step 1/4. Its pathway is nucleotide-sugar biosynthesis; ADP-L-glycero-beta-D-manno-heptose biosynthesis; ADP-L-glycero-beta-D-manno-heptose from D-glycero-beta-D-manno-heptose 7-phosphate: step 3/4. In terms of biological role, catalyzes the phosphorylation of D-glycero-D-manno-heptose 7-phosphate at the C-1 position to selectively form D-glycero-beta-D-manno-heptose-1,7-bisphosphate. Its function is as follows. Catalyzes the ADP transfer from ATP to D-glycero-beta-D-manno-heptose 1-phosphate, yielding ADP-D-glycero-beta-D-manno-heptose. The polypeptide is Bifunctional protein HldE (Pseudomonas savastanoi pv. phaseolicola (strain 1448A / Race 6) (Pseudomonas syringae pv. phaseolicola (strain 1448A / Race 6))).